The following is a 384-amino-acid chain: Omega-6 fatty acid desaturase, endoplasmic reticulum (384 aa).

Residues 1–23 (MGAGGRMQVSPSPKKSETDTLKR) are disordered. Over residues 14–23 (KKSETDTLKR) the composition is skewed to basic and acidic residues. The next 2 helical transmembrane spans lie at 56-76 (LIWD…YFPL) and 84-104 (VAWP…WVIA). A Histidine box-1 motif is present at residues 105 to 109 (HECGH). A helical membrane pass occupies residues 117 to 137 (WLDDTVGLIFHSFLLVPYFSW). The Histidine box-2 signature appears at 141-145 (HRRHH). The next 3 helical transmembrane spans lie at 180–200 (VMLT…NVSG), 226–246 (IYVS…YAAA), and 253–273 (VCLY…ITYL). A Histidine box-3 motif is present at residues 316–320 (HVAHH).

It belongs to the fatty acid desaturase type 1 family.

The protein localises to the endoplasmic reticulum membrane. It functions in the pathway lipid metabolism; polyunsaturated fatty acid biosynthesis. Functionally, ER (microsomal) omega-6 fatty acid desaturase introduces the second double bond in the biosynthesis of 18:3 fatty acids, important constituents of plant membranes. It is thought to use cytochrome b5 as an electron donor and to act on fatty acids esterified to phosphatidylcholine and, possibly, other phospholipids. In Brassica juncea (Indian mustard), this protein is Omega-6 fatty acid desaturase, endoplasmic reticulum.